A 650-amino-acid polypeptide reads, in one-letter code: Sodium-dependent phosphate transporter 2 (650 aa).

Topologically, residues 1 to 5 are extracellular; sequence MAMDG. The chain crosses the membrane as a helical span at residues 6-26; the sequence is YLWMVILGFIIAFILAFSVGA. Over 27–46 the chain is Cytoplasmic; it reads NDVANSFGTAVGSGVVTLRQ. Residues 47 to 67 traverse the membrane as a helical segment; that stretch reads ACILASIFETTGSVLLGAKVG. Residues 68–83 are Extracellular-facing; that stretch reads ETIRKGIIDVNLYNDT. The N-linked (GlcNAc...) asparagine glycan is linked to N81. A helical transmembrane segment spans residues 84–104; sequence VVTLMAGEVSAMVGSAVWQLI. Residues 105-109 lie on the Cytoplasmic side of the membrane; the sequence is ASFLR. Residues 110–130 traverse the membrane as a helical segment; it reads LPISGTHCIVGSTIGFSLVAN. Residues 131–142 lie on the Extracellular side of the membrane; that stretch reads GTKGVQWMELVK. Residues 143 to 163 form a helical membrane-spanning segment; sequence IVASWFISPLLSGFMSGVLFV. Over 164 to 192 the chain is Cytoplasmic; sequence LIRMFILTKEDPVPNGLQALPLFYAATIA. The helical transmembrane segment at 193 to 212 threads the bilayer; that stretch reads INVFSIMYTGAPVLGLSLPI. W213 is a topological domain (extracellular). A helical membrane pass occupies residues 214–234; it reads AIALISFGVALLFAFFVWLFV. Residues 235–482 are Cytoplasmic-facing; sequence CPWMRRKIAG…EEKEEKDTAE (248 aa). Phosphoserine is present on residues S253, S256, S259, S268, S315, and S384. Positions 268-310 are disordered; that stretch reads SPFKELPGAKASDDSAVPLTNPTGEAVGPSEGTSTGNHPRTAY. Residues 483–503 traverse the membrane as a helical segment; that stretch reads VHLLFHFLQVLTACFGSFAHG. Over 504-530 the chain is Extracellular; the sequence is GNDVSNAIGPLVALWLIYEQGGVMQEA. The chain crosses the membrane as a helical span at residues 531 to 551; the sequence is ATPVWLLFYGGVGICTGLWVW. Residues 552 to 571 lie on the Cytoplasmic side of the membrane; it reads GRRVIQTMGKDLTPITPSSG. Residues 572-586 form a helical membrane-spanning segment; that stretch reads FTIELASAFTVVIAS. Over 587-593 the chain is Extracellular; the sequence is NIGLPVS. A helical membrane pass occupies residues 594 to 609; that stretch reads TTHCKVGSVVAVGWIR. Residues 610-621 lie on the Cytoplasmic side of the membrane; the sequence is SRKAVDWHLFRN. Residues 622–642 traverse the membrane as a helical segment; the sequence is IFVAWFVTVPVAGLFSAAIMA. The Extracellular portion of the chain corresponds to 643–650; sequence IFMYGILS.

The protein belongs to the inorganic phosphate transporter (PiT) (TC 2.A.20) family. Homodimer.

The protein localises to the cell membrane. It is found in the apical cell membrane. The enzyme catalyses 2 Na(+)(out) + phosphate(out) = 2 Na(+)(in) + phosphate(in). Functionally, sodium-phosphate symporter which preferentially transports the monovalent form of phosphate with a stoichiometry of two sodium ions per phosphate ion. Plays a critical role in the determination of bone quality and strength by providing phosphate for bone mineralization. Required to maintain normal cerebrospinal fluid phosphate levels. Mediates phosphate-induced calcification of vascular smooth muscle cells (VCMCs) and can functionally compensate for loss of SLC20A1 in VCMCs. Its function is as follows. (Microbial infection) Functions as a retroviral receptor and confers hamster cells susceptibility to infection to Gibbon Ape Leukemia Virus (GaLV) and amphotropic murine leukemia virus (A-MuLV). The polypeptide is Sodium-dependent phosphate transporter 2 (SLC20A2) (Cricetulus griseus (Chinese hamster)).